The primary structure comprises 409 residues: Putative lipoate-protein ligase A (409 aa).

In terms of domain architecture, BPL/LPL catalytic spans 146 to 330 (GPDNCRLLFY…RFQKTFKVDG (185 aa)). Residues Arg188, 193 to 196 (GTVL), and Lys249 each bind ATP. Lys249 contacts (R)-lipoate.

Belongs to the LplA family. As to quaternary structure, monomer.

The catalysed reaction is L-lysyl-[lipoyl-carrier protein] + (R)-lipoate + ATP = N(6)-[(R)-lipoyl]-L-lysyl-[lipoyl-carrier protein] + AMP + diphosphate + H(+). It functions in the pathway protein modification; protein lipoylation via exogenous pathway; protein N(6)-(lipoyl)lysine from lipoate: step 1/2. It participates in protein modification; protein lipoylation via exogenous pathway; protein N(6)-(lipoyl)lysine from lipoate: step 2/2. Catalyzes both the ATP-dependent activation of exogenously supplied lipoate to lipoyl-AMP and the transfer of the activated lipoyl onto the lipoyl domains of lipoate-dependent enzymes. The polypeptide is Putative lipoate-protein ligase A (AIM22) (Saccharomyces cerevisiae (strain ATCC 204508 / S288c) (Baker's yeast)).